We begin with the raw amino-acid sequence, 128 residues long: Modulator protein MzrA (128 aa).

The Cytoplasmic portion of the chain corresponds to 1–11 (MMVMKRPSLRQ). Residues 12–32 (FSWLLGGSLLLGALFWLWLAV) traverse the membrane as a helical segment. Residues 33 to 128 (QQQEATLAIR…RLRDAPHRLG (96 aa)) lie on the Periplasmic side of the membrane.

The protein belongs to the MzrA family. As to quaternary structure, interacts with EnvZ.

Its subcellular location is the cell inner membrane. Functionally, modulates the activity of the EnvZ/OmpR two-component regulatory system, probably by directly modulating EnvZ enzymatic activity and increasing stability of phosphorylated OmpR. The sequence is that of Modulator protein MzrA from Klebsiella pneumoniae subsp. pneumoniae (strain ATCC 700721 / MGH 78578).